A 400-amino-acid chain; its full sequence is MSERVILAYSGGLDTSVAISWIGKETGSEVVAVAIDLGQGGEDMEVVRQRALDCGAVEAVVVDARDEFAEQYCLPAIKSNALYMDRYPLVSALSRPLIVKHLVDAAREHGGGVVAHGCTGKGNDQVRFEVGFASLAPDLKVLAPVRDYAWTREKAIAFAEENAIPINVTKRSPFSIDQNVWGRAVETGFLEHLWNAPTKDVYDYTEDPTLNWSSPDEVIIGFDKGVPVSIDGKPVTVLQAIEQLNARAGAQGVGRLDVVEDRLVGIKSREIYEAPGAMVLITAHTELEHVTLERELGRFKRTTDQKWGELVYDGLWFSPLKTALESFVANTQEHVTGEIRLVLHGGHIAVNGRRSQESLYDFNLATYDEGDTFDQSAAKGFVHVHGLSSSLSARRDLAGK.

8-16 (AYSGGLDTS) serves as a coordination point for ATP. Tyr-87 contacts L-citrulline. Gly-117 serves as a coordination point for ATP. L-aspartate contacts are provided by Thr-119, Asn-123, and Asp-124. Asn-123 contacts L-citrulline. Arg-127, Ser-175, Glu-260, and Tyr-272 together coordinate L-citrulline.

Belongs to the argininosuccinate synthase family. Type 1 subfamily. In terms of assembly, homotetramer.

It localises to the cytoplasm. It carries out the reaction L-citrulline + L-aspartate + ATP = 2-(N(omega)-L-arginino)succinate + AMP + diphosphate + H(+). It participates in amino-acid biosynthesis; L-arginine biosynthesis; L-arginine from L-ornithine and carbamoyl phosphate: step 2/3. This Mycolicibacterium vanbaalenii (strain DSM 7251 / JCM 13017 / BCRC 16820 / KCTC 9966 / NRRL B-24157 / PYR-1) (Mycobacterium vanbaalenii) protein is Argininosuccinate synthase.